Consider the following 469-residue polypeptide: UDP-glycosyltransferase 43 (469 aa).

Residues serine 280, 345–346 (WV), 363–371 (HCGWNSILE), and 385–388 (YSEQ) contribute to the UDP-alpha-D-glucose site.

Belongs to the UDP-glycosyltransferase family.

Its activity is regulated as follows. Inhibited by Cu(2+) or Zn(2+). Glycosyltransferase that catalyzes the C-glucosylation of daidzein to puerarin. Shows activity with the isoflavones daidzein and genistein, but has no activity towards flavonoids such as 2-hydroxynaringenin. Can use UDP-glucose, but not UDP-galactose or UDP-glucuronic acid as sugar donor. Does not require bivalent cations for activity. This chain is UDP-glycosyltransferase 43, found in Pueraria montana var. lobata (Kudzu vine).